The primary structure comprises 6874 residues: MAASPVLPTEDGEGFLGIDDLHFSLQAEQEDTQKKTFTCWINSQLAKHTPPSVVSDLFADIKKGHVLLDLLEVLSGQQLPRDKGSNTFQCRINIEHALTFLKNRSIKLINIHVADIVEGNPSIILGLIWTIILHFHIEKLAQTLSCDYNQPSPEVVSVAASSPTSSPPTKKCSKAQAQARWQWSAKKALLQWAQEQCARSESVNVTDFKSSWRNGMAFLAVIHALRPDLIDMDSMRHRSNKDNLKEAFRIAEHELKIPKLLEPEDVDVVNPDEKSIMTYVAQFLKYSKDAPGPGDSTQAKVRDALVWLTLQEKRFQKMLKDSASETYCNKYHSLLSFMESLNEEKESFIDVLSLKGRMGELNEDESRLRQGWTSLMHQVAAWRAQLDDALPSPLKETEAWLKDIEGVVQEGVPTSQSYSEARTLIQGKLSSFKSLMGSFDYHSDVLMAFQSNAEKSLPAVPPVKLEEMTRRINNVLGKNFIPLLEFHDSKCSVLALLDEAKAKLDVWNGTYESKESVEVLLEDWHKFTGEKKFLIQLDASFQKCEEMYKNSARECESIREEYMMLEKNVHSCRQYIHNTKATLQRALMSWATFEEDLALLKASFDLTKKEQIKEVPVETLLQWNTKHTSLNEVGSFLIGVSSREVAASISKELRRLNKRWRKFITKTPLLKLPLVKIQDQPPGNSSGTSLSKESAMAAEPGGSRGEDVKAAEKQEVEDEESAGQLKVNEEVEGLIKQVTIWESQTKSILDLLQHGDHADGSSADTLQHLIAKGSVYEELLARTEDTLQMDVQSPSNLEPFQNVLRAGLQAKIQEAKQGVQITMVELSAVLKNLSDEPLELDLGLKVEEAQKELEVSILRAEQLLGQRERPGGFLLKYKEALEILNTNSLAKYLRAVEELKRTVPGGAKLQLEEQSRVASAKWEPLRHEISLYLQQLKIAIEEEKLRDNIARLEKQINKEKKLIRRGRTRGLRKEHEACLSPESIKCQLEHHVGVLRVLCEELTSPEDQQELKRALRDYEQKIARLLKCASEIHTTLQSSQGGALEERSALITTENGRRDADGEVPLEIPDNQLSTEKAMEPIKNFSQTSELKPQQEESIMEKEGKDCSASLSDLQERYDTQRGLLEQHLQDSKSRVTSDFASEQERSSACLQSKLAELQVLLADTDAHWEKFEITSLNLRRLMSDAEKPVLNQERDLLKGNEQVLHGLLNTRMESLEMALQIVLPLEKECSLLCASDLPLCTVAVQDLHPVEIDGVYQNLRDIRDSIAKQIRVCTSLEEPSNSVPRELHTLDQCAIQDIVLKCRLQLETMNQKVEMREDALDALEGFLASLRAAKLSAELPADRPAPKAPEVLSEDILLMKEKAGPLDERLRTLGINIKDAEGGENTTCERLVGALSVNLVAMDGQSKEEGPPEDKKLLEACSSKNLELFKNIQDLQNQISKIGLKDPTAPAVKHRKKSLLRLDKDLDGLEEEKVRIQKIAGSLPRFKDGSEKNVIQQCEDTAALWESTKASVTESLEQCGSALELLRQYQNIKNNLTALIQKEEGIISQQASYMGKDNLKKKIAEIETVKEEFSDHLEVVDKINQICKNLQYHLNKMKTFEDPPFEKEANAIVDRWLDINEKTEEYGENLGRALALWDKLFIIKNNIDEWTEQILGKAESHELTEEDRGRLKEELKVLEEQSAEFSRRVADIQSLLQSNEKPLELQVMESSVLSKMKDVKTHVAGGSNSYAPSGSTAELREDLDQAKTQMGMTESLLNALSPSDSLEIFTKLEEIQQQIFQQKHSMTVLENQIGCLTPELSELKRQYASVSNLFNTKKNALQDHFATFLNEQCKNFNDWFSNVKTNLQECFEPPETKLSLEQRLQKLSDFLTLGGGNSKIQQVETVLQHVKMLLPKAHVKELDSWLRSQELELENMESICQARAGELNNSFQQLLRLEDDCRSLSKWLTNQEENWGKMEVSGERMDLFSQALTRKREQFETVAQLSDSLKEHGLTEGEETIKESTHLIDRYQALWRQLHEIEEEDKLPAAEDQSFNDLADDVIHWIKEIKESLMALNSSEGKMPLEERIQKIKEIIALKPEGDAKIQMVMRQAEHCEAPLAQETFTDLSNQWDSTLHLANTYLSHQEKLVLEGEKYLQSKEDLRLMLTELKKQQEAGFALQPGLPEKQAQLKIYKKFLQKAQDLTSLLEELKSQGNYLLECTKNPSFSEEPWLEVKHLHESLLQQLQDSVQKLEGHVQEHSSYQVCLTDLSSTLDDISKEYFSLCDGSKDQIMAKERMQKLQELESRLRFQGGALKKASALAKSIKQNTSSVGQKIIKDDIRSLKYKQKDLENRIESAKQETENGLNSILKSKSSTEKHVKFSLPVEEMPATSEVPKPTRESAAVGESGGARETNTNSAVEMILSKQLSLNVQESMQNAQDEREVNELQNQPLELDIMLRNEQLKGMEELSTHLEARRAAIELLEQSQHLNQTEEQALVLPAARPSVCHLGSLQQELHTLKKTKERQYGLLSGFQDQLVMAEASLNTSLAEVESLKIGSLDSATYLGKIKKFLGSVENQQGSLSKLRTEWAHLSSLLAAADQKLVESQMKHLEHGWELVEQLAHRKCFQQATEHSELTCLLEKLQDLKVSLHQQQQRLTLSLNSPGQQAAIVDMVTPAAELQAIKCEFSGLKWQAELHMKRLWGEKDKKTLEDAINNLNKQMEALEPLNREVENRIKKCELQNRIKETLSWVKNTMAELVVPIALLPDNILSQIRKCKLIHDGILGNQQAVELLVEEVRGITPSLAPCEGDGLNALLEDLQSQHQALLLKSTERSQQLELKLEEKSKLFAIIGKVQLTLEESETLMSPTGDRASTEAELERRLAILKASQQQLQDTESALSAHLQELTNAYKDANVFERLFLDDQLKNLKARTNRTQRFLQNNGSELKQKMESYREFHDKAAVLQKEAECILHGGLLPLRQELEQDAKEQLGNLRDKLAAIRGSLSQVLTSEEVFDTIGLSWDGSLLARLQTQVLEREREVEGKIKQLDTFLIARDRHQASISKIRAVDLQIKKGAESLLKVPSMSPESTLLNAQTLIQKIEKSKRLRDEIIRKLSKNEAFDDSFKESEMQRLKLCAEENSRLQEALQNMLLELQPREMGEKEFREKLENALHVLKQIQSRLQQPLCVNLGVQHIQHEKETWEAFGEQVEAEMCGLRAVRITEEQREENDSGTGGMEAKLRDIEGLHMELSKSISLRADVLNDAYDSANRYDELVAGALRIITSLEATLLSYRVDLHNPQKTLELAHLKQEELQSSVADLRSLTETLGAISSPEAKEQLRCTLEVLAAKNSALKAGLEAQEAEEERCLENYKCFRKMKEEICSRLRKMEMDLGQSIFPLPRSYKEALARLEQSKALTSNLLSTKEDLVKLRQLLRHLRCRSTENDATCALGVASALWEKWLSLLEAAREWQQWGGELKREWKFISEEIEREAIILETLQEDLPEISKTNAAPTEELWQLLDSLCQHQESVEKQQLLLALLLQRVRSIQNIPEGTETGETIPALQEIGSMQERCDRLLHTTRKNKDLVQAEIQAQQSFLKEIKDVKRVFEQISTSFPNLAPEGHPERAEQFEELRSILQKGKLSFENIMEKLRIKYSEMYSIVPAEIGSQVEECRSALEDAEEKMSSEVSKSSPSSIMRRKIERINNGLHCVEKMLQQKSRNIEEAHEIQKKIWDELDLWHSKLNELDSEVQDFVEQDPGQAQEWMDNLMAPFQQHQQVSQRAESRTSQLNKATIKMEEYNDLLKSTEVWIEKTSCLLANPACYDSSRTLSHRASTLQMALEDSEQKHSLLHSIFTDLEDLSIIFETDDLIQTIHELSDQVAALQQQIMEALPHVQQVADDVVAIESEVKAMEKKVAKIKAILLSKEIFDFPPEEHLKHGEVILENIHPMKKTIAEIMTYQVELRLPQTGTKPLPVFQRTSQLLQDVKLLENVTQEQNELLKVVIKQTAECDEEIDSLKQMLTNYSAEISPEHVSQNQVADLPSLQGEMERLEKQILNLNQKKEDLLVDLKTAVLNLHEHLKQEQQEVGDKPSAGASECTVAERDASERKLSRTNSMSFLPVVKEEAEESSVKSEDGRRRTEPPSASWSFLGKHSKDLEGDGASSSSSATIVQDADGRISTCDSSMVHIIAPDSGSTEEGPAPSPRLSQTDEGATPPIEAALLDFPREQGAFESTVERSRPRPADILRVCKTQVAKLELWLQQANVAFEPETVDADMQQVVEEELAGCQAMLTEIEYKVASLLETCKDQGLGDCGTTQQEAEALSWKLKTVKCNLEKVQMVLQEKFSEDQHPSTLKKPSEPHDVDQPAGLSELDSVLTERPQFSRQKDAPQPQILELKPSEQKDLIKFTELNAKKTWLQGHQENEDANRQSASSSKVPSPGNAASDSTLPLQAQSGDKWQYLHHELTSRPNPSVPQLVEPQVALTTSTLPSVSVYNFRCPTADELQAYTTQLEELRQEANTIQTQGSMTEETYISLDKRLFELFLSLSRCLGSVEGLLQRPGLLREDACAQQVFFQKLALELKKLYLALGDKKDDFLKAVTWPGKEATLLPECIDALTVSLESVQSRAAWRDASLKAGLEHSRSYQNEVKRLYSQLIKKKTALQQSLNEISGQSISKQLQKADVHTAELQNSEKQVAKLRDEGERLRFPHGLLQDVYKLEDVLDSMWGILRARYLELSSPFLSKSLQTLLQGMAELVSIGKGKLAADPLQHAKSKAALQAQLQDHKAFFQKLVADMLLIQTYSATMFPPSLQKGEGFGAEQVAEVRALEEEACLRGAQLQSMLQKWEEFDDNYASLEKDLEALISSLPSVSLVEETEERLLERISFYQQIKRNIDGKHARLCQTLNEGRQLAASVSCPEPEGQIARLEEQWLSLNKRIDQELHRLQTLLKHLLSYSRDSDELTRWLETSQQTLNYWKEQSLNVSQDLNTIRSNIDRFFKFSKEVDERSSLKSAVMSTGNQLLHLKEADTATLRASLAQFEQKWTVLITQLPDIQEKLHQLQMEKLPSREAISEMISWMNAVEPQAAGKDTELSKSSASQVKHLLQKLKEFRMEMDYKQWVVDFVNQSLLQLSTCDVESKRYERTEFAEHLGEMNRQWQRVHGTLNRKIQHLEQLLESITENENKVQNLNSWLEAQEERLKMLQKPESAVSMEKLLLDCQDIENQLALKSKALDELRQSSLTMDGGDVPLLEDMASGIVELFQKKNNVTSQVHQLRASVQSVLQEWKACDKLYDEATMRTTQLTYSMEHSKPAVLSLQALACQVQNLEALQDEAENGERSWEKLQEVIGRLKASCPSMAGIIEEKCQDAHSRWTQVNQDLADQLQEARGQLQLWKAPHNAHAEAAAWLQQQEAKFQQLANTNLSGDNLADILPRALKDIKGLQSDLQKTKEAFLENSTLSDQLPQPEERSTPGLHSGQRHSLQTAAYLEKMLLAKSNEFEIVLAQFKDFTDRLAYSKDLIVHKEENLNKLYHEEKEEVPDLFLNHVLALTAQSPDIERLNEESLRLPLSDVTIKTLQSLNRQWIRATATALDHYSELQGNGLNEKFLHYCERWIQVLEKIQESLSVEVAHSLPALLEQQKTYEILEAEVSTNQAVADAYVTQSLQLLDTAEIEKRPEFVSEFSKLSDQWQRAARGVRQRKCDISRLVTQWRFFTTSVEDLLRFLADTSQLLSAVKEQDCYSLCQTRRLVHELKSKEIHLQRWRTTYALALEAGEKLRNTPSPETREFVDGQISRLQESWKDTELSLGEVISRLQSTAETWDQCKKKIKKLKKRLQALKAQSEDPLPELHEALHEEKELIKEVEKSLANWTHSLKELQTMKADLSQHILAEDVTVLKEQIQLLHRQWEDLCLRVAIRKQEIEDRLNSWIVFNEKNKELCAWLVQMENKVLQTADVSIEEMIEKLQKDCMEEISLFTENKLQLKQMGDQLIKASSKAKAAELEEKLSKINDRWQHLFDVIGSRVKKLKETFAFIQQLDKNMSNLRTWLARIESELSKPVVYDVCDNQEIQKRLAEQQDLQRDIEQHSAGVESVFNICDVLLHDSDACANETECDSIQQTTRSLDRRWRNICAMSMERRMKIEETWRLWQKFLDDYSRFEDWLKSAERTAACPNSSEVLYTNAKEELKRFEAFQRQIHERLTQLELINKQYRRLARENRTDTASKLKQMVHEGNQRWDNLQKRVTAILRRLRYFTNQREEFEGTRESILVWLTEMDLQLTNVEHFSESDAEDKMRQLNGFQQEITLNTNKIDQLIVFGEQLIQKSEPLDAVLIEDELEELHRYCQEVFGRVSRFHRRLTSHTPGLDDEKEASENETDIEDPREIQADSWRKRRESEEPTSPQSLCHLVPPALGHERSGCETPVSVDSIPLEWDHTGDVGGSSSHEDDEEGPFYSALSGKSISEGHPWHVPDSPSHSKHHYKHMEGDRTEAPVPTDASTPFKSDYVKLLLRQGTDDSKEGLKEAQQEDEQLATLTGQQPGAFDRWELIQAQELHSKLRLKQTVQQLKSDIGSIAAWLGKTEAELEALKLAEPPSDIQEIALRVKRLQEILKAFDTYKALMVSVNVSHKEYLPSQSPEATELQNRLHQLSLSWDSVQGVLDSWRGDLRQSLMQCQDFHQLSQDLLLWLATAESRRQKAHVTSPEADRQVLLECQKDLMRLEKELVARQPQVSSLREISSSLLVKGQGEDYIEAEEKVHVIEKKLKQLQEQVAQDLMSLQRSLDPDASLTSFDEVDSGEQLPAAFAKSPRPRWTFLEEEEEEEETDSRMPHLDSPGSSQPRRSFLSRVIRAALPLQLLLLLLLLLACLLPASEDDYSCTQANNFARSFYPMLRYTNGPPPT.

Residues 1-286 form an actin-binding region; sequence MAASPVLPTE…MTYVAQFLKY (286 aa). At 1–6823 the chain is on the cytoplasmic side; it reads MAASPVLPTE…RRSFLSRVIR (6823 aa). Calponin-homology (CH) domains follow at residues 31-136 and 183-288; these read DTQK…LHFH and WSAK…KYSK. Spectrin repeat units follow at residues 299-380, 381-474, 475-577, and 578-680; these read AKVR…HQVA, AWRA…RINN, VLGK…QYIH, and NTKA…IQDQ. A coiled-coil region spans residues 299–6767; it reads AKVRDALVWL…PDASLTSFDE (6469 aa). A disordered region spans residues 675–723; the sequence is VKIQDQPPGNSSGTSLSKESAMAAEPGGSRGEDVKAAEKQEVEDEESAG. The segment covering 681–692 has biased composition (polar residues); it reads PPGNSSGTSLSK. Over residues 704-714 the composition is skewed to basic and acidic residues; the sequence is RGEDVKAAEKQ. Spectrin repeat units lie at residues 727-834, 835-928, 929-1030, 1120-1211, 1262-1322, 1323-1409, 1410-1514, 1515-1626, 1627-1728, 1729-1820, 1821-1928, 1929-2026, 2027-2122, 2123-2233, 2234-2350, 2422-2503, 2504-2610, 2611-2707, 2708-2821, 2822-2923, 2924-3027, 3028-3133, 3134-3239, 3240-3343, 3344-3456, 3457-3563, 3564-3669, 3670-3767, 3768-3870, 3871-3976, and 3977-4074; these read VNEE…KNLS, DEPL…LRHE, ISLY…KCAS, TQRG…LLNT, DIRD…DALD, ALEG…QSKE, EGPP…ASVT, ESLE…KTEE, YGEN…AGGS, NSYA…TKKN, ALQD…AGEL, NNSF…EEED, KLPA…LANT, YLSH…SVQK, LEGH…LNSI, DERE…TLKK, TKER…KCFQ, QATE…EALE, PLNR…QLEL, KLEE…FLQN, NGSE…GKIK, QLDT…NMLL, ELQP…SLRA, DVLN…AQEA, EEER…QWGG, ELKR…TTRK, NKDL…SSEV, SKSS…ESRT, SQLN…QIME, ALPH…VTQE, and QNEL…KPSA. Positions 2338-2397 are disordered; the sequence is SAKQETENGLNSILKSKSSTEKHVKFSLPVEEMPATSEVPKPTRESAAVGESGGARETNT. The segment covering 2344–2354 has biased composition (polar residues); it reads ENGLNSILKSK. Disordered stretches follow at residues 4062-4152, 4171-4193, 4326-4348, and 4401-4429; these read KQEQ…ATIV, APDS…TDEG, FSED…DQPA, and HQEN…DSTL. Residues 4081 to 4091 are compositionally biased toward basic and acidic residues; the sequence is VAERDASERKL. Ser4096 is subject to Phosphoserine. Residues 4110–4122 show a composition bias toward basic and acidic residues; sequence SSVKSEDGRRRTE. One copy of the Spectrin 36 repeat lies at 4218–4337; sequence RSRPRPADIL…EDQHPSTLKK (120 aa). The span at 4326–4345 shows a compositional bias: basic and acidic residues; the sequence is FSEDQHPSTLKKPSEPHDVD. The span at 4409–4429 shows a compositional bias: polar residues; sequence RQSASSSKVPSPGNAASDSTL. 17 Spectrin repeats span residues 4507 to 4626, 4627 to 4714, 4715 to 4823, 4824 to 4929, 4930 to 5037, 5038 to 5150, 5151 to 5252, 5253 to 5377, 5378 to 5473, 5474 to 5576, 5577 to 5691, 5692 to 5786, 5787 to 5894, 5895 to 6004, 6005 to 6122, 6123 to 6230, and 6231 to 6342; these read SMTE…RSYQ, NEVK…RARY, LELS…QSML, QKWE…QTLL, KHLL…QEKL, HQLQ…KIQH, LEQL…SQVH, QLRA…KAPH, NAHA…MLLA, KSNE…YSEL, QGNG…QWRF, FTTS…LSLG, EVIS…RVAI, RKQE…VKKL, KETF…EETW, RLWQ…LRYF, and TNQR…PGLD. The tract at residues 5435 to 5459 is disordered; the sequence is NSTLSDQLPQPEERSTPGLHSGQRH. Ser5772 is subject to Phosphoserine. A disordered region spans residues 6336 to 6473; it reads SHTPGLDDEK…TEAPVPTDAS (138 aa). Positions 6341 to 6354 are enriched in acidic residues; sequence LDDEKEASENETDI. A phosphoserine mark is found at Ser6348, Ser6371, Ser6400, Ser6417, Ser6418, Ser6419, and Ser6448. A compositionally biased stretch (basic and acidic residues) spans 6355-6372; it reads EDPREIQADSWRKRRESE. Spectrin repeat units follow at residues 6450–6534, 6535–6650, and 6651–6767; these read SHSK…KLRL, KQTV…QCQD, and FHQL…SFDE. The segment at 6790 to 6812 is disordered; it reads EEEEEEEETDSRMPHLDSPGSSQ. The KASH domain maps to 6815-6874; the sequence is RSFLSRVIRAALPLQLLLLLLLLLACLLPASEDDYSCTQANNFARSFYPMLRYTNGPPPT. A helical; Anchor for type IV membrane protein transmembrane segment spans residues 6824–6844; the sequence is AALPLQLLLLLLLLLACLLPA. At 6845 to 6874 the chain is on the perinuclear space side; the sequence is SEDDYSCTQANNFARSFYPMLRYTNGPPPT. Positions 6861-6874 are sufficient for interaction with SUN2; the sequence is FYPMLRYTNGPPPT.

The protein belongs to the nesprin family. Core component of LINC complexes which are composed of inner nuclear membrane SUN domain-containing proteins coupled to outer nuclear membrane KASH domain-containing nesprins. SUN and KASH domain-containing proteins seem to bind each other promiscuously; however, some LINC complex constituents are tissue- or cell type-specific. At least SUN1/2-containing core LINC complexes are proposed to be hexameric composed of three protomers of each KASH and SUN domain-containing protein. The SUN2:SYNE2/KASH2 complex is a heterohexamer; the homotrimeric cloverleave-like conformation of the SUN domain is a prerequisite for LINC complex formation in which three separate SYNE2/KASH2 peptides bind at the interface of adjacent SUN domains. Interacts with EMD, LMNA, MKS3 and F-actin via its N-terminal domain. Interacts with DCTN1 and DYNC1I1/2; suggesting the association with the dynein-dynactin motor complex. Associates with kinesin motor complexes. Interacts with TMEM67. Interacts (via KASH domain) with TMEM258. Interacts with BROX; this interaction promotes SYN2 ubiquitination and facilitates the relaxation of mechanical stress imposed by compressive actin fibers at the rupture site. The disulfid bond with SUN2 is required for stability of the SUN2:SYNE2/KASH2 LINC complex under tensile forces though not required for the interaction. As to expression, C-terminal isoforms are highly expressed in the brain, hert and skeletal muscle. Isoform 1 (Nesprin-2 Giant) is most prevalent in the brain, skin, kidney and skeletal muscle.

It is found in the nucleus outer membrane. The protein localises to the sarcoplasmic reticulum membrane. Its subcellular location is the cell membrane. The protein resides in the cytoplasm. It localises to the cytoskeleton. It is found in the mitochondrion. The protein localises to the nucleus. Its subcellular location is the nucleoplasm. In terms of biological role, multi-isomeric modular protein which forms a linking network between organelles and the actin cytoskeleton to maintain the subcellular spatial organization. As a component of the LINC (LInker of Nucleoskeleton and Cytoskeleton) complex involved in the connection between the nuclear lamina and the cytoskeleton. The nucleocytoplasmic interactions established by the LINC complex play an important role in the transmission of mechanical forces across the nuclear envelope and in nuclear movement and positioning. Specifically, SYNE2 and SUN2 assemble in arrays of transmembrane actin-associated nuclear (TAN) lines which are bound to F-actin cables and couple the nucleus to retrograde actin flow during actin-dependent nuclear movement. May be involved in nucleus-centrosome attachment. During interkinetic nuclear migration (INM) at G2 phase and nuclear migration in neural progenitors its LINC complex association with SUN1/2 and probable association with cytoplasmic dynein-dynactin motor complexes functions to pull the nucleus toward the centrosome; SYNE1 and SYNE2 seem to act redundantly in cerebellum, midbrain, brain stem, and other brain regions except cerebral cortex and hippocampus. During INM at G1 phase mediates respective LINC complex association with kinesin to push the nucleus away from the centrosome. Involved in nuclear migration in retinal photoreceptor progenitors. Required for centrosome migration to the apical cell surface during early ciliogenesis. This chain is Nesprin-2, found in Mus musculus (Mouse).